A 244-amino-acid chain; its full sequence is 7-cyano-7-deazaguanine synthase (244 aa).

14-24 (FSGGQDSATCV) provides a ligand contact to ATP. Residues Cys-202, Cys-217, Cys-220, and Cys-223 each coordinate Zn(2+).

It belongs to the QueC family. Requires Zn(2+) as cofactor.

It catalyses the reaction 7-carboxy-7-deazaguanine + NH4(+) + ATP = 7-cyano-7-deazaguanine + ADP + phosphate + H2O + H(+). It functions in the pathway purine metabolism; 7-cyano-7-deazaguanine biosynthesis. Functionally, catalyzes the ATP-dependent conversion of 7-carboxy-7-deazaguanine (CDG) to 7-cyano-7-deazaguanine (preQ(0)). The polypeptide is 7-cyano-7-deazaguanine synthase (Burkholderia cenocepacia (strain ATCC BAA-245 / DSM 16553 / LMG 16656 / NCTC 13227 / J2315 / CF5610) (Burkholderia cepacia (strain J2315))).